Here is a 132-residue protein sequence, read N- to C-terminus: Agouti-signaling protein (132 aa).

The N-terminal stretch at 1–22 (MDVTRLLLATLLVFLCFFTACS) is a signal peptide. The N-linked (GlcNAc...) asparagine glycan is linked to Asn39. The disordered stretch occupies residues 61–87 (QISRKEAEKKRSSKKEASMKKVARPRT). Positions 63 to 79 (SRKEAEKKRSSKKEASM) are enriched in basic and acidic residues. Cystine bridges form between Cys93–Cys108, Cys100–Cys114, Cys107–Cys125, Cys111–Cys132, and Cys116–Cys123. The Agouti domain maps to 93-132 (CVATRDSCKPPAPACCDPCASCQCRFFRSACSCRVLSLNC).

It is found in the secreted. Involved in the regulation of melanogenesis. The binding of ASP to MC1R precludes alpha-MSH initiated signaling and thus blocks production of cAMP, leading to a down-regulation of eumelanogenesis (brown/black pigment) and thus increasing synthesis of pheomelanin (yellow/red pigment). In Macaca nigrescens (Gorontalo macaque), this protein is Agouti-signaling protein (ASIP).